The chain runs to 371 residues: Queuine tRNA-ribosyltransferase (371 aa).

Asp90 serves as the catalytic Proton acceptor. Residues 90-94, Asp144, Gln189, and Gly215 each bind substrate; that span reads DSGGF. Positions 246 to 252 are RNA binding; sequence GVGTPEN. The Nucleophile role is filled by Asp265. Positions 270-274 are RNA binding; important for wobble base 34 recognition; the sequence is TRNAR. Residues Cys303, Cys305, Cys308, and His334 each contribute to the Zn(2+) site.

This sequence belongs to the queuine tRNA-ribosyltransferase family. Homodimer. Within each dimer, one monomer is responsible for RNA recognition and catalysis, while the other monomer binds to the replacement base PreQ1. Requires Zn(2+) as cofactor.

It carries out the reaction 7-aminomethyl-7-carbaguanine + guanosine(34) in tRNA = 7-aminomethyl-7-carbaguanosine(34) in tRNA + guanine. Its pathway is tRNA modification; tRNA-queuosine biosynthesis. Its function is as follows. Catalyzes the base-exchange of a guanine (G) residue with the queuine precursor 7-aminomethyl-7-deazaguanine (PreQ1) at position 34 (anticodon wobble position) in tRNAs with GU(N) anticodons (tRNA-Asp, -Asn, -His and -Tyr). Catalysis occurs through a double-displacement mechanism. The nucleophile active site attacks the C1' of nucleotide 34 to detach the guanine base from the RNA, forming a covalent enzyme-RNA intermediate. The proton acceptor active site deprotonates the incoming PreQ1, allowing a nucleophilic attack on the C1' of the ribose to form the product. After dissociation, two additional enzymatic reactions on the tRNA convert PreQ1 to queuine (Q), resulting in the hypermodified nucleoside queuosine (7-(((4,5-cis-dihydroxy-2-cyclopenten-1-yl)amino)methyl)-7-deazaguanosine). The chain is Queuine tRNA-ribosyltransferase from Helicobacter acinonychis (strain Sheeba).